The sequence spans 207 residues: uncharacterized protein (207 aa).

The N-terminal stretch at methionine 1–serine 19 is a signal peptide.

It to P.aeruginosa PA4490 and T.maritima TM0986.

This is an uncharacterized protein from Escherichia coli (strain K12).